Here is a 576-residue protein sequence, read N- to C-terminus: Lysine--tRNA ligase (576 aa).

2 residues coordinate Mg(2+): E412 and E419.

It belongs to the class-II aminoacyl-tRNA synthetase family. In terms of assembly, homodimer. Requires Mg(2+) as cofactor.

The protein resides in the cytoplasm. The enzyme catalyses tRNA(Lys) + L-lysine + ATP = L-lysyl-tRNA(Lys) + AMP + diphosphate. This is Lysine--tRNA ligase from Phocaeicola vulgatus (strain ATCC 8482 / DSM 1447 / JCM 5826 / CCUG 4940 / NBRC 14291 / NCTC 11154) (Bacteroides vulgatus).